A 488-amino-acid polypeptide reads, in one-letter code: Retinoic acid receptor RXR-alpha (488 aa).

The segment at Met-1–Ile-160 is modulating. A Glycyl lysine isopeptide (Lys-Gly) (interchain with G-Cter in SUMO) cross-link involves residue Lys-134. A DNA-binding region (nuclear receptor) is located at residues Lys-158–Glu-233. Residues Cys-161, Cys-164, Cys-178, and Cys-181 each contribute to the Zn(2+) site. Residues Cys-161–Cys-181 form an NR C4-type zinc finger. The nuclear localization signal stretch occupies residues Lys-186–Lys-191. Residues Cys-197, Cys-203, Cys-213, and Cys-216 each contribute to the Zn(2+) site. An NR C4-type zinc finger spans residues Cys-197–Cys-216. The segment at Lys-227–Asn-250 is hinge. Over residues Gln-232 to Asn-244 the composition is skewed to basic and acidic residues. The segment at Gln-232–Met-256 is disordered. The NR LBD domain maps to Asn-253 to Pro-484. Residues Arg-342 and Ala-353 each contribute to the 9-cis-retinoate site. All-trans-retinoate-binding residues include Arg-342 and Ala-353. The segment at Arg-374–Gly-394 is required for nuclear export. The interval Ile-473–Pro-484 is AF-2.

The protein belongs to the nuclear hormone receptor family. NR2 subfamily. Homodimer. Heterodimer; with a rar molecule. Binds DNA preferentially as a rar/rxr heterodimer. Interacts with coactivator ncoa3 and with senp6. In terms of processing, sumoylated on Lys-134; which negatively regulates transcriptional activity. Desumoylated specifically by SENP6.

It is found in the nucleus. Its function is as follows. Receptor for retinoic acid that acts as a transcription factor. Forms homo- or heterodimers with retinoic acid receptors (rars) and binds to target response elements in response to their ligands, all-trans or 9-cis retinoic acid, to regulate gene expression in various biological processes. The rar/rxr heterodimers bind to the retinoic acid response elements (RARE) composed of tandem 5'-AGGTCA-3' sites known as DR1-DR5 to regulate transcription. The high affinity ligand for rxrs is 9-cis retinoic acid. In the absence of ligand, the rar/rxr heterodimers associate with a multiprotein complex containing transcription corepressors that induce histone deacetylation, chromatin condensation and transcriptional suppression. On ligand binding, the corepressors dissociate from the receptors and coactivators are recruited leading to transcriptional activation. The polypeptide is Retinoic acid receptor RXR-alpha (rxra) (Xenopus laevis (African clawed frog)).